The chain runs to 199 residues: Probable NADH dehydrogenase [ubiquinone] iron-sulfur protein 7, mitochondrial (199 aa).

Residues Cys74, Cys75, Cys139, and Cys169 each coordinate [4Fe-4S] cluster.

This sequence belongs to the complex I 20 kDa subunit family. In terms of assembly, complex I is composed of 45 different subunits This is a component of the iron-sulfur (IP) fragment of the enzyme. Requires [4Fe-4S] cluster as cofactor.

It localises to the mitochondrion. The catalysed reaction is a ubiquinone + NADH + 5 H(+)(in) = a ubiquinol + NAD(+) + 4 H(+)(out). Core subunit of the mitochondrial membrane respiratory chain NADH dehydrogenase (Complex I) that is believed to belong to the minimal assembly required for catalysis. Complex I functions in the transfer of electrons from NADH to the respiratory chain. The immediate electron acceptor for the enzyme is believed to be ubiquinone. The sequence is that of Probable NADH dehydrogenase [ubiquinone] iron-sulfur protein 7, mitochondrial (nduf-7) from Caenorhabditis elegans.